The following is a 153-amino-acid chain: Putative ubiquitin-conjugating enzyme E2 N-like (153 aa).

The UBC core domain occupies 3-150 (ELPHRIIKET…ARAWTRLYAM (148 aa)). Lysine 83 carries the post-translational modification N6-acetyllysine.

The protein belongs to the ubiquitin-conjugating enzyme family. In terms of tissue distribution, expressed in epididymis (at protein level).

In Homo sapiens (Human), this protein is Putative ubiquitin-conjugating enzyme E2 N-like (UBE2NL).